The chain runs to 149 residues: 3-dehydroquinate dehydratase (149 aa).

Tyr-24 (proton acceptor) is an active-site residue. Substrate is bound by residues Asn-76, His-82, and Asp-89. Residue His-102 is the Proton donor of the active site. Substrate is bound by residues 103-104 and Arg-113; that span reads LS.

It belongs to the type-II 3-dehydroquinase family. Homododecamer.

The catalysed reaction is 3-dehydroquinate = 3-dehydroshikimate + H2O. It functions in the pathway metabolic intermediate biosynthesis; chorismate biosynthesis; chorismate from D-erythrose 4-phosphate and phosphoenolpyruvate: step 3/7. Catalyzes a trans-dehydration via an enolate intermediate. The sequence is that of 3-dehydroquinate dehydratase from Acinetobacter baylyi (strain ATCC 33305 / BD413 / ADP1).